The following is a 199-amino-acid chain: Superoxide dismutase [Mn/Fe] (199 aa).

Fe(3+) contacts are provided by His-27, His-81, Asp-161, and His-165. Mn(2+) contacts are provided by His-27, His-81, Asp-161, and His-165.

The protein belongs to the iron/manganese superoxide dismutase family. As to quaternary structure, homodimer. Mn(2+) is required as a cofactor. Fe(3+) serves as cofactor.

The enzyme catalyses 2 superoxide + 2 H(+) = H2O2 + O2. In terms of biological role, destroys superoxide anion radicals which are normally produced within the cells and which are toxic to biological systems. Catalyzes the dismutation of superoxide anion radicals into O2 and H2O2 by successive reduction and oxidation of the transition metal ion at the active site. The protein is Superoxide dismutase [Mn/Fe] (sodA) of Staphylococcus epidermidis.